The chain runs to 220 residues: ATP-dependent dethiobiotin synthetase BioD (220 aa).

Residue 11–16 coordinates ATP; that stretch reads GVGKTF. T15 provides a ligand contact to Mg(2+). K36 is a catalytic residue. T40 lines the substrate pocket. ATP-binding positions include D48 and 107-110; that span reads EGAG. Mg(2+) contacts are provided by D48 and E107.

Belongs to the dethiobiotin synthetase family. In terms of assembly, homodimer. Mg(2+) serves as cofactor.

The protein localises to the cytoplasm. It carries out the reaction (7R,8S)-7,8-diammoniononanoate + CO2 + ATP = (4R,5S)-dethiobiotin + ADP + phosphate + 3 H(+). The protein operates within cofactor biosynthesis; biotin biosynthesis; biotin from 7,8-diaminononanoate: step 1/2. Its function is as follows. Catalyzes a mechanistically unusual reaction, the ATP-dependent insertion of CO2 between the N7 and N8 nitrogen atoms of 7,8-diaminopelargonic acid (DAPA, also called 7,8-diammoniononanoate) to form a ureido ring. This Aquifex aeolicus (strain VF5) protein is ATP-dependent dethiobiotin synthetase BioD.